The primary structure comprises 260 residues: Small ribosomal subunit protein uS3 (260 aa).

Residues 39 to 114 enclose the KH type-2 domain; the sequence is LRQYIEQKLG…QIRINVVEVQ (76 aa). Positions 217–260 are disordered; sequence GQEPDPLPPASRDRERDPRDRDREPRRRQQQRRRQQFEDRSNEG. 2 stretches are compositionally biased toward basic and acidic residues: residues 227–243 and 251–260; these read SRDR…EPRR and QQFEDRSNEG.

It belongs to the universal ribosomal protein uS3 family. In terms of assembly, part of the 30S ribosomal subunit. Forms a tight complex with proteins S10 and S14.

In terms of biological role, binds the lower part of the 30S subunit head. Binds mRNA in the 70S ribosome, positioning it for translation. The protein is Small ribosomal subunit protein uS3 of Nostoc punctiforme (strain ATCC 29133 / PCC 73102).